We begin with the raw amino-acid sequence, 473 residues long: H(+)/Cl(-) exchange transporter ClcA (473 aa).

The Cytoplasmic portion of the chain corresponds to 1-32 (MKTDTPSLETPQAARLRRRQLIRQLLERDKTP). A helical transmembrane segment spans residues 33-69 (LAILFMAAVVGTLVGLAAVAFDKGVAWLQNQRMGALV). Residues 70-76 (HTADNYP) are Periplasmic-facing. A helical membrane pass occupies residues 77–100 (LLLTVAFLCSAVLAMFGYFLVRKY). A Selectivity filter part_1 motif is present at residues 106 to 110 (GSGIP). S107 is a binding site for chloride. The segment at residues 109-116 (IPEIEGAL) is an intramembrane region (helical). At 117–123 (EDQRPVR) the chain is on the cytoplasmic side. A run of 2 helical transmembrane segments spans residues 124–141 (WWRVLPVKFFGGLGTLGG) and 148–166 (EGPTVQIGGNIGRMVLDIF). The Selectivity filter part_2 signature appears at 146 to 150 (GREGP). Over 167-176 (RLKGDEARHT) the chain is Cytoplasmic. Intramembrane regions (helical) lie at residues 177-189 (LLATGAAAGLAAA) and 193-201 (PLAGILFII). The Cytoplasmic segment spans residues 202–214 (EEMRPQFRYTLIS). The helical transmembrane segment at 215–232 (IKAVFIGVIMSTIMYRIF) threads the bilayer. Topologically, residues 233 to 252 (NHEVALIDVGKLSDAPLNTQ) are periplasmic. A helical membrane pass occupies residues 253 to 281 (WLYLILGIIFGIFGPIFNKWVLGMQDLLH). At 282 to 287 (RVHGGN) the chain is on the cytoplasmic side. The helical transmembrane segment at 288–309 (ITKWVLMGGAIGGLCGLLGFVA) threads the bilayer. The Periplasmic segment spans residues 310 to 329 (PATSGGGFNLIPIATAGNFS). 2 consecutive transmembrane segments (helical) span residues 330-349 (MGMLVFIFVARVITTLLCFS) and 355-376 (GIFAPMLALGTVLGTAFGMVVV). The short motif at 355-359 (GIFAP) is the Selectivity filter part_3 element. I356 and F357 together coordinate chloride. The Periplasmic segment spans residues 377-386 (ELFPQYHLEA). The segment at residues 387 to 401 (GTFAIAGMGALLAAS) is an intramembrane region (helical). The segment at residues 402–404 (IRA) is an intramembrane region (note=Loop between two helices). Positions 405 to 416 (PLTGIILVLEMT) form an intramembrane region, helical. Positions 417-421 (DNYQL) form an intramembrane region, note=Loop between two helices. A helical membrane pass occupies residues 422 to 438 (ILPMIITGLGATLLAQF). The Cytoplasmic portion of the chain corresponds to 439–473 (TGGKPLYSAILARTLAKQEAEQLARSKAASASENT). Y445 serves as a coordination point for chloride.

It belongs to the chloride channel (TC 2.A.49) family. ClcA subfamily. As to quaternary structure, homodimer.

The protein resides in the cell inner membrane. The enzyme catalyses 2 chloride(in) + H(+)(out) = 2 chloride(out) + H(+)(in). Functionally, proton-coupled chloride transporter. Functions as antiport system and exchanges two chloride ions for 1 proton. Probably acts as an electrical shunt for an outwardly-directed proton pump that is linked to amino acid decarboxylation, as part of the extreme acid resistance (XAR) response. The sequence is that of H(+)/Cl(-) exchange transporter ClcA from Shigella boydii serotype 18 (strain CDC 3083-94 / BS512).